The chain runs to 1225 residues: DNA-directed RNA polymerase subunit beta' (1225 aa).

Zn(2+) is bound by residues cysteine 60, cysteine 62, cysteine 75, and cysteine 78. Mg(2+) is bound by residues aspartate 450, aspartate 452, and aspartate 454. Zn(2+)-binding residues include cysteine 818, cysteine 892, cysteine 899, and cysteine 902.

Belongs to the RNA polymerase beta' chain family. As to quaternary structure, the RNAP catalytic core consists of 2 alpha, 1 beta, 1 beta' and 1 omega subunit. When a sigma factor is associated with the core the holoenzyme is formed, which can initiate transcription. It depends on Mg(2+) as a cofactor. Requires Zn(2+) as cofactor.

The catalysed reaction is RNA(n) + a ribonucleoside 5'-triphosphate = RNA(n+1) + diphosphate. Functionally, DNA-dependent RNA polymerase catalyzes the transcription of DNA into RNA using the four ribonucleoside triphosphates as substrates. The sequence is that of DNA-directed RNA polymerase subunit beta' from Streptococcus pneumoniae (strain ATCC 700669 / Spain 23F-1).